The sequence spans 467 residues: Cysteine--tRNA ligase (467 aa).

Cys-28 is a Zn(2+) binding site. The 'HIGH' region signature appears at 30 to 40; sequence PTVYNYIHVGN. Positions 212, 237, and 241 each coordinate Zn(2+). Residues 269 to 273 carry the 'KMSKS' region motif; it reads KMSKS. Position 272 (Lys-272) interacts with ATP.

The protein belongs to the class-I aminoacyl-tRNA synthetase family. As to quaternary structure, monomer. It depends on Zn(2+) as a cofactor.

The protein localises to the cytoplasm. It carries out the reaction tRNA(Cys) + L-cysteine + ATP = L-cysteinyl-tRNA(Cys) + AMP + diphosphate. The protein is Cysteine--tRNA ligase of Oenococcus oeni (strain ATCC BAA-331 / PSU-1).